Reading from the N-terminus, the 245-residue chain is MIIPALDLIDGNVVRLHQGDYGQQRDYGSDALPRLQDYQDQGAEVLHLVDLTGAKNPAARQTPLLSRLLAGVNVPVQVGGGIRHQDDVDALLQAGATRVVVGSTAVKQPEDVQQWFRQYGADAIVLALDVRIDADNRKEVAIGGWQEAAGMTLEQAIEQFLPYGLKHVLCTDISRDGTLAGSNVDLYREVSARYPQIAFQSSGGIGSLQDIRALRGSGAQGVIVGRALLENKFTVSEAISCWQNG.

The active-site Proton acceptor is Asp7. The active-site Proton donor is Asp129.

Belongs to the HisA/HisF family.

It is found in the cytoplasm. The enzyme catalyses 1-(5-phospho-beta-D-ribosyl)-5-[(5-phospho-beta-D-ribosylamino)methylideneamino]imidazole-4-carboxamide = 5-[(5-phospho-1-deoxy-D-ribulos-1-ylimino)methylamino]-1-(5-phospho-beta-D-ribosyl)imidazole-4-carboxamide. The protein operates within amino-acid biosynthesis; L-histidine biosynthesis; L-histidine from 5-phospho-alpha-D-ribose 1-diphosphate: step 4/9. The polypeptide is 1-(5-phosphoribosyl)-5-[(5-phosphoribosylamino)methylideneamino] imidazole-4-carboxamide isomerase (Erwinia tasmaniensis (strain DSM 17950 / CFBP 7177 / CIP 109463 / NCPPB 4357 / Et1/99)).